The primary structure comprises 522 residues: DNA damage-binding protein cmr1 (522 aa).

Residues 34 to 47 (VFTPTLPNRATGSQ) show a composition bias toward polar residues. Disordered regions lie at residues 34 to 89 (VFTP…KRKA) and 217 to 239 (QEKP…DPVL). Over residues 49–59 (KTKKKPAPKKV) the composition is skewed to basic residues. The stretch at 182 to 223 (LTPERVYTMTFHPSETKPLIFAGDKMGHLGILDASQEKPTSV) is one WD 1 repeat. Residues 226–236 (EDEDEEDDDPD) are compositionally biased toward acidic residues. WD repeat units follow at residues 244-284 (PHTR…SVER), 294-331 (VPLS…QGSV), 336-376 (LSEK…RREP), 381-422 (EHQS…ASWK), 445-488 (GRWV…LAQL), and 491-522 (DGIT…CLWM).

It belongs to the WD repeat DDB2/WDR76 family.

Its function is as follows. DNA-binding protein that binds to both single- and double-stranded DNA. Binds preferentially to UV-damaged DNA. May be involved in DNA-metabolic processes. The chain is DNA damage-binding protein cmr1 from Aspergillus oryzae (strain ATCC 42149 / RIB 40) (Yellow koji mold).